The following is a 1076-amino-acid chain: DNA-directed RNA polymerase subunit beta (1076 aa).

Belongs to the RNA polymerase beta chain family. In plastids the minimal PEP RNA polymerase catalytic core is composed of four subunits: alpha, beta, beta', and beta''. When a (nuclear-encoded) sigma factor is associated with the core the holoenzyme is formed, which can initiate transcription.

The protein localises to the plastid. It localises to the chloroplast. The enzyme catalyses RNA(n) + a ribonucleoside 5'-triphosphate = RNA(n+1) + diphosphate. In terms of biological role, DNA-dependent RNA polymerase catalyzes the transcription of DNA into RNA using the four ribonucleoside triphosphates as substrates. The sequence is that of DNA-directed RNA polymerase subunit beta from Triticum aestivum (Wheat).